We begin with the raw amino-acid sequence, 1096 residues long: Adenylate-forming reductase Nps9 (1096 aa).

The interval 39 to 352 is adenylation (A) domain; it reads DDTLTEISFL…TTEFGAPTQL (314 aa). AMP contacts are provided by residues His-236, 339–340, Thr-344, and 425–428; these read VQ and IIGR. The Carrier domain maps to 569 to 656; it reads EWTVSTLEHW…LLADRVAKIA (88 aa). Ser-605 is subject to O-(pantetheine 4'-phosphoryl)serine. Residues 716 to 952 are reductase (R) domain; sequence LTGSTGGLGS…MPAEKVSAAI (237 aa). Residues 720 to 723, 807 to 809, Tyr-880, and Lys-884 contribute to the NADP(+) site; these read TGGL and SAW.

This sequence belongs to the adenylate-forming reductase family.

Functionally, adenylate-forming reductase, a natural product biosynthesis enzyme that resembles non-ribosomal peptide synthetases, yet serves to modify one substrate, rather than to condense two or more building blocks. The A-domain preferentially accepts L-threonine as substrate. The natural product of the enzyme is not yet known. The sequence is that of Adenylate-forming reductase Nps9 from Serpula lacrymans var. lacrymans (strain S7.9) (Dry rot fungus).